We begin with the raw amino-acid sequence, 980 residues long: Putative formate dehydrogenase YrhE (980 aa).

Residues 5-81 form the 2Fe-2S ferredoxin-type domain; it reads KSISVRVDGT…GMSIDLSGNR (77 aa). Residues Cys-39, Cys-50, Cys-53, and Cys-65 each contribute to the [2Fe-2S] cluster site. The 4Fe-4S His(Cys)3-ligated-type domain maps to 81–121; sequence RVKEAQTEAMDRLLENHLLYCTVCDNNNGNCTLHNTAEMMG. 16 residues coordinate [4Fe-4S] cluster: His-97, Cys-101, Cys-104, Cys-111, Cys-153, Cys-156, Cys-159, Cys-163, Cys-196, Cys-199, Cys-202, Cys-206, Cys-270, Cys-273, Cys-277, and Cys-305. 2 4Fe-4S ferredoxin-type domains span residues 144–171 and 187–216; these read PFYRYDPNQCIACGQCVEVCQNLQVNET and EGVPINESSCVSCGQCVTVCPCNALMEKSM. The interval 258-980 is formate dehydrogenase; the sequence is MRETRTKKTK…NRPGYVHLTD (723 aa). Residues 263 to 319 enclose the 4Fe-4S Mo/W bis-MGD-type domain; that stretch reads TKKTKTVCTFCGVGCSFEVWTKGRDILKIQPVSDAPVNAISTCVKGKFGWDFVNSKE. The tract at residues 944–980 is disordered; the sequence is ETAPLPKTNPRNKKRHPQNGVEAERKWNRPGYVHLTD.

It in the C-terminal section; belongs to the prokaryotic molybdopterin-containing oxidoreductase family. It depends on [2Fe-2S] cluster as a cofactor. [4Fe-4S] cluster serves as cofactor. Mo-bis(molybdopterin guanine dinucleotide) is required as a cofactor.

The enzyme catalyses formate + NAD(+) = CO2 + NADH. In Bacillus subtilis (strain 168), this protein is Putative formate dehydrogenase YrhE (yrhE).